The primary structure comprises 261 residues: MLDKVKNVIVVLSGKGGVGKSTVSTQLALALRQTGHKVGLLDIDLCGPSVPYLLGLEGSDIFQCDEGWVPIYTDESQTLAVMSIGFLLKNRTDPVIWRGPKKTMMIRQFLTDVKWDELDYLIIDTPPGTSDEHITVMECLREVPCNGAIIVTTPQGVALDDVRKEITFCKKTGIKLLGIVENMSGFVCPHCTSCTNIFSSNGGVELAKYAQIPHLGTLPIDPRVGVLAGTTASVLDELPDSTTAEVLRGLVQHLDSITLTA.

14 to 21 provides a ligand contact to ATP; the sequence is GKGGVGKS. Cys188 and Cys191 together coordinate [4Fe-4S] cluster.

The protein belongs to the Mrp/NBP35 ATP-binding proteins family. NUBP2/CFD1 subfamily. In terms of assembly, heterotetramer of 2 Nubp1 and 2 Nubp2 chains. [4Fe-4S] cluster serves as cofactor.

The protein localises to the cytoplasm. Component of the cytosolic iron-sulfur (Fe/S) protein assembly (CIA) machinery. Required for maturation of extramitochondrial Fe-S proteins. The Nubp1-Nubp2 heterotetramer forms a Fe-S scaffold complex, mediating the de novo assembly of an Fe-S cluster and its transfer to target apoproteins. The sequence is that of Cytosolic Fe-S cluster assembly factor Nubp2 homolog from Drosophila ananassae (Fruit fly).